Here is a 91-residue protein sequence, read N- to C-terminus: Probable Fe(2+)-trafficking protein (91 aa).

This sequence belongs to the Fe(2+)-trafficking protein family.

In terms of biological role, could be a mediator in iron transactions between iron acquisition and iron-requiring processes, such as synthesis and/or repair of Fe-S clusters in biosynthetic enzymes. This Xanthomonas axonopodis pv. citri (strain 306) protein is Probable Fe(2+)-trafficking protein.